We begin with the raw amino-acid sequence, 440 residues long: Glyceraldehyde-3-phosphate dehydrogenase, testis-specific (440 aa).

The interval 1-105 (MSRRDVVLTN…PPPPPLQKPA (105 aa)) is testis-specific N-terminal extension. Composition is skewed to pro residues over residues 40–75 (PPKL…PPQI) and 83–102 (APPP…PPLQ). Residues 40–106 (PPKLEDPPPT…PPPPLQKPAR (67 aa)) are disordered. Residues 117-118 (RI), Asp138, Lys183, Tyr205, and Thr225 each bind NAD(+). Residues 255 to 257 (SCT), Thr286, 315 to 316 (TG), and Arg338 each bind D-glyceraldehyde 3-phosphate. The active-site Nucleophile is the Cys256. Phosphoserine is present on Ser358. Asn420 is an NAD(+) binding site.

The protein belongs to the glyceraldehyde-3-phosphate dehydrogenase family. As to quaternary structure, homotetramer. In terms of tissue distribution, testis specific.

It localises to the cytoplasm. The catalysed reaction is D-glyceraldehyde 3-phosphate + phosphate + NAD(+) = (2R)-3-phospho-glyceroyl phosphate + NADH + H(+). It functions in the pathway carbohydrate degradation; glycolysis; pyruvate from D-glyceraldehyde 3-phosphate: step 1/5. Its function is as follows. May play an important role in regulating the switch between different pathways for energy production during spermiogenesis and in the spermatozoon. Required for sperm motility and male fertility. The protein is Glyceraldehyde-3-phosphate dehydrogenase, testis-specific (Gapdhs) of Mus musculus (Mouse).